We begin with the raw amino-acid sequence, 461 residues long: Ribitol-5-phosphate transferase FKTN (461 aa).

Over 1-7 the chain is Cytoplasmic; sequence MSRINKN. Residues 6-27 form a required and sufficient for interaction with POMGNT1 region; that stretch reads KNVVLALLTLTSSAFLLFQLYY. The helical; Signal-anchor for type II membrane protein transmembrane segment at 8–28 threads the bilayer; sequence VVLALLTLTSSAFLLFQLYYY. Residues 29–461 lie on the Lumenal side of the membrane; the sequence is KHYLSTRNGA…SEWDEVIQLY (433 aa). N92 carries N-linked (GlcNAc...) asparagine glycosylation.

The protein belongs to the LicD transferase family. Forms a complex composed of FKTN/fukutin, FKRP and RXYLT1/TMEM5. Interacts (via transmembrane domain) with POMGNT1; the interaction is direct and is required for normal POMGNT1 location in Golgi membranes. As to expression, expressed in the retina (at protein level).

The protein localises to the golgi apparatus membrane. Its subcellular location is the cytoplasm. It is found in the nucleus. It catalyses the reaction 3-O-[beta-D-GalNAc-(1-&gt;3)-beta-D-GlcNAc-(1-&gt;4)-(O-6-P-alpha-D-Man)]-Thr-[protein] + CDP-L-ribitol = 3-O-[Rib-ol-P-3-beta-D-GalNAc-(1-&gt;3)-beta-D-GlcNAc-(1-&gt;4)-(O-6-P-alpha-D-Man)]-Thr-[protein] + CMP + H(+). Its pathway is protein modification; protein glycosylation. Functionally, catalyzes the transfer of CDP-ribitol to the distal N-acetylgalactosamine of the phosphorylated O-mannosyl trisaccharide (N-acetylgalactosamine-beta-3-N-acetylglucosamine-beta-4-(phosphate-6-)mannose), a carbohydrate structure present in alpha-dystroglycan (DAG1). This constitutes the first step in the formation of the ribitol 5-phosphate tandem repeat which links the phosphorylated O-mannosyl trisaccharide to the ligand binding moiety composed of repeats of 3-xylosyl-alpha-1,3-glucuronic acid-beta-1. May interact with and reinforce a large complex encompassing the outside and inside of muscle membranes. Could be involved in brain development. This is Ribitol-5-phosphate transferase FKTN from Macaca fascicularis (Crab-eating macaque).